Consider the following 264-residue polypeptide: MKQYLELIQKVLDEGTQKNDRTGTGTLSIFGHQMRFNLLEGFPLVTTKRCHLRSIIHELLWFLQGDTNIAYLHENNVTIWDEWADENGDLGPVYGKQWRAWPTPDGRHIDQIATVLSQLKNDPDSRRIIVSAWNVGELDKMALAPCHAFFQFYVADGKLSCQLYQRSCDVFLGLPFNIASYALLVHMMAQQCDLDVGDFVWTGGDTHLYSNHMEQTHLQLSREPRALPKLVIKRKPDSLFDYRFDDFEIEGYDPHPGIKAPVAI.

A dUMP-binding site is contributed by R21. H51 lines the (6R)-5,10-methylene-5,6,7,8-tetrahydrofolate pocket. R126 to R127 provides a ligand contact to dUMP. The active-site Nucleophile is the C146. DUMP-binding positions include R166–D169, N177, and H207–Y209. Residue D169 participates in (6R)-5,10-methylene-5,6,7,8-tetrahydrofolate binding. (6R)-5,10-methylene-5,6,7,8-tetrahydrofolate is bound at residue A263.

It belongs to the thymidylate synthase family. Bacterial-type ThyA subfamily. As to quaternary structure, homodimer.

It localises to the cytoplasm. The catalysed reaction is dUMP + (6R)-5,10-methylene-5,6,7,8-tetrahydrofolate = 7,8-dihydrofolate + dTMP. It functions in the pathway pyrimidine metabolism; dTTP biosynthesis. Functionally, catalyzes the reductive methylation of 2'-deoxyuridine-5'-monophosphate (dUMP) to 2'-deoxythymidine-5'-monophosphate (dTMP) while utilizing 5,10-methylenetetrahydrofolate (mTHF) as the methyl donor and reductant in the reaction, yielding dihydrofolate (DHF) as a by-product. This enzymatic reaction provides an intracellular de novo source of dTMP, an essential precursor for DNA biosynthesis. The polypeptide is Thymidylate synthase (Salmonella typhi).